We begin with the raw amino-acid sequence, 281 residues long: 2-dehydro-3-deoxyphosphooctonate aldolase (281 aa).

The protein belongs to the KdsA family.

It is found in the cytoplasm. It catalyses the reaction D-arabinose 5-phosphate + phosphoenolpyruvate + H2O = 3-deoxy-alpha-D-manno-2-octulosonate-8-phosphate + phosphate. Its pathway is carbohydrate biosynthesis; 3-deoxy-D-manno-octulosonate biosynthesis; 3-deoxy-D-manno-octulosonate from D-ribulose 5-phosphate: step 2/3. The protein operates within bacterial outer membrane biogenesis; lipopolysaccharide biosynthesis. The chain is 2-dehydro-3-deoxyphosphooctonate aldolase from Pseudomonas entomophila (strain L48).